Reading from the N-terminus, the 465-residue chain is Ribulose bisphosphate carboxylase large chain (465 aa).

Lys-4 bears the N6,N6,N6-trimethyllysine mark. Substrate is bound by residues Asn-113 and Thr-163. The active-site Proton acceptor is the Lys-165. Position 167 (Lys-167) interacts with substrate. Residues Lys-191, Asp-193, and Glu-194 each contribute to the Mg(2+) site. N6-carboxylysine is present on Lys-191. His-284 (proton acceptor) is an active-site residue. Substrate contacts are provided by Arg-285, His-317, and Ser-369.

The protein belongs to the RuBisCO large chain family. Type I subfamily. In terms of assembly, heterohexadecamer of 8 large chains and 8 small chains; disulfide-linked. The disulfide link is formed within the large subunit homodimers. Mg(2+) serves as cofactor. The disulfide bond which can form in the large chain dimeric partners within the hexadecamer appears to be associated with oxidative stress and protein turnover.

The protein localises to the plastid. It is found in the chloroplast. It catalyses the reaction 2 (2R)-3-phosphoglycerate + 2 H(+) = D-ribulose 1,5-bisphosphate + CO2 + H2O. The catalysed reaction is D-ribulose 1,5-bisphosphate + O2 = 2-phosphoglycolate + (2R)-3-phosphoglycerate + 2 H(+). Functionally, ruBisCO catalyzes two reactions: the carboxylation of D-ribulose 1,5-bisphosphate, the primary event in carbon dioxide fixation, as well as the oxidative fragmentation of the pentose substrate in the photorespiration process. Both reactions occur simultaneously and in competition at the same active site. This is Ribulose bisphosphate carboxylase large chain from Cornus canadensis (Bunchberry dogwood).